Reading from the N-terminus, the 88-residue chain is Probable Fe(2+)-trafficking protein (88 aa).

This sequence belongs to the Fe(2+)-trafficking protein family.

Its function is as follows. Could be a mediator in iron transactions between iron acquisition and iron-requiring processes, such as synthesis and/or repair of Fe-S clusters in biosynthetic enzymes. The chain is Probable Fe(2+)-trafficking protein from Teredinibacter turnerae (strain ATCC 39867 / T7901).